We begin with the raw amino-acid sequence, 159 residues long: Ribosomal RNA large subunit methyltransferase H (159 aa).

Residues Leu76, Gly108, and 127–132 contribute to the S-adenosyl-L-methionine site; that span reads FGKMTL.

This sequence belongs to the RNA methyltransferase RlmH family. As to quaternary structure, homodimer.

The protein localises to the cytoplasm. It catalyses the reaction pseudouridine(1915) in 23S rRNA + S-adenosyl-L-methionine = N(3)-methylpseudouridine(1915) in 23S rRNA + S-adenosyl-L-homocysteine + H(+). Functionally, specifically methylates the pseudouridine at position 1915 (m3Psi1915) in 23S rRNA. The sequence is that of Ribosomal RNA large subunit methyltransferase H from Lysinibacillus sphaericus (strain C3-41).